The sequence spans 288 residues: 4-diphosphocytidyl-2-C-methyl-D-erythritol kinase (288 aa).

K22 is an active-site residue. 104 to 114 is an ATP binding site; sequence PSQAGLGGGSS. D146 is an active-site residue.

This sequence belongs to the GHMP kinase family. IspE subfamily.

It carries out the reaction 4-CDP-2-C-methyl-D-erythritol + ATP = 4-CDP-2-C-methyl-D-erythritol 2-phosphate + ADP + H(+). Its pathway is isoprenoid biosynthesis; isopentenyl diphosphate biosynthesis via DXP pathway; isopentenyl diphosphate from 1-deoxy-D-xylulose 5-phosphate: step 3/6. In terms of biological role, catalyzes the phosphorylation of the position 2 hydroxy group of 4-diphosphocytidyl-2C-methyl-D-erythritol. The chain is 4-diphosphocytidyl-2-C-methyl-D-erythritol kinase from Protochlamydia amoebophila (strain UWE25).